The primary structure comprises 95 residues: Small ribosomal subunit protein bS6 (95 aa).

This sequence belongs to the bacterial ribosomal protein bS6 family.

Binds together with bS18 to 16S ribosomal RNA. This chain is Small ribosomal subunit protein bS6, found in Caldanaerobacter subterraneus subsp. tengcongensis (strain DSM 15242 / JCM 11007 / NBRC 100824 / MB4) (Thermoanaerobacter tengcongensis).